The primary structure comprises 677 residues: Platelet glycoprotein Ib alpha chain (677 aa).

The first 16 residues, 1–16 (MHLLLWLLLLARLCRP), serve as a signal peptide directing secretion. The 31-residue stretch at 17–47 (EFICEVSKVTSQVEVNCDNKGLKALPPGLPG) folds into the LRRNT domain. Residues 17-564 (EFICEVSKVT…NPDLCCLLPL (548 aa)) are Extracellular-facing. Cys-20 and Cys-33 are oxidised to a cystine. LRR repeat units lie at residues 72–93 (RLAQ…GMLP), 94–115 (RLET…GRAL), 117–138 (ALTT…TLDG), 141–162 (HLHE…LLAP), 165–186 (QLRK…FLEG), and 189–210 (ELDT…FFGD). The LRRCT domain maps to 221–282 (NPWSCDCEIL…HTYQGKDCPS (62 aa)). 2 cysteine pairs are disulfide-bonded: Cys-225/Cys-264 and Cys-227/Cys-280. Residues Tyr-291 and Tyr-294 each carry the sulfotyrosine modification. Residues Thr-309, Thr-319, Thr-323, Thr-324, Thr-346, Thr-354, Thr-368, Thr-372, Thr-376, Thr-377, and Thr-399 are each glycosylated (O-linked (GalNAc...) threonine). The disordered stretch occupies residues 359–499 (TLGPIMPTTT…EPTTTPTSPT (141 aa)). Composition is skewed to low complexity over residues 362 to 385 (PIMP…TTPT), 393 to 403 (PTTLEPTTTPI), 411 to 421 (PTTLEPTTTPI), and 427 to 470 (TPST…TPTI). A compositionally biased stretch (pro residues) spans 471-485 (PELPTPPTTPEPTMP). Positions 486–499 (PTTLEPTTTPTSPT) are enriched in low complexity. Thr-487 carries O-linked (GalNAc...) threonine glycosylation. Ser-497 carries O-linked (GalNAc...) serine glycosylation. Thr-500 carries an O-linked (GalNAc...) threonine glycan. The O-linked (GalNAc...) serine glycan is linked to Ser-523. A helical membrane pass occupies residues 565–585 (GFYILGLLWLLFASVVLILLL). Residues 586–677 (TWAQHVKPQA…VGVRYSSHSL (92 aa)) lie on the Cytoplasmic side of the membrane. Residues Ser-654 and Ser-657 each carry the phosphoserine modification.

In terms of assembly, two GP-Ib beta are disulfide-linked to one GP-Ib alpha. GP-IX is complexed with the GP-Ib heterodimer via a non covalent linkage. Interacts with FLNB. Interacts with FLNA (via filamin repeats 4, 9, 12, 17, 19, 21, and 23). Post-translationally, O-glycosylated. Glycocalicin is the product of a proteolytic cleavage/shedding, catalyzed by ADAM17, which releases most of the extracellular domain. Binding sites for vWF and thrombin are in this part of the protein.

It localises to the membrane. Functionally, GP-Ib, a surface membrane protein of platelets, participates in the formation of platelet plugs by binding to the A1 domain of vWF, which is already bound to the subendothelium. This Canis lupus familiaris (Dog) protein is Platelet glycoprotein Ib alpha chain (GP1BA).